The following is a 322-amino-acid chain: Undecaprenyl-phosphate 4-deoxy-4-formamido-L-arabinose transferase (322 aa).

Residues 1–235 lie on the Cytoplasmic side of the membrane; sequence MFEIHPVKKV…TCLTTTPLRM (235 aa). A helical transmembrane segment spans residues 236-256; it reads LSLLGSIIAIGGFSIAVLLVI. The Periplasmic segment spans residues 257-269; it reads LRLTFGPQWAAEG. Residues 270–290 traverse the membrane as a helical segment; sequence VFMLFAVLFTFIGAQFIGMGL. Over 291-322 the chain is Cytoplasmic; sequence LGEYIGRIYTDVRARPRYFVQQVIRPSSKENE.

This sequence belongs to the glycosyltransferase 2 family.

The protein localises to the cell inner membrane. The enzyme catalyses UDP-4-deoxy-4-formamido-beta-L-arabinose + di-trans,octa-cis-undecaprenyl phosphate = 4-deoxy-4-formamido-alpha-L-arabinopyranosyl di-trans,octa-cis-undecaprenyl phosphate + UDP. Its pathway is glycolipid biosynthesis; 4-amino-4-deoxy-alpha-L-arabinose undecaprenyl phosphate biosynthesis; 4-amino-4-deoxy-alpha-L-arabinose undecaprenyl phosphate from UDP-4-deoxy-4-formamido-beta-L-arabinose and undecaprenyl phosphate: step 1/2. It participates in bacterial outer membrane biogenesis; lipopolysaccharide biosynthesis. Functionally, catalyzes the transfer of 4-deoxy-4-formamido-L-arabinose from UDP to undecaprenyl phosphate. The modified arabinose is attached to lipid A and is required for resistance to polymyxin and cationic antimicrobial peptides. The sequence is that of Undecaprenyl-phosphate 4-deoxy-4-formamido-L-arabinose transferase from Shigella dysenteriae serotype 1 (strain Sd197).